We begin with the raw amino-acid sequence, 74 residues long: Translation initiation factor IF-1, chloroplastic (74 aa).

Residues 1 to 72 (MERQNLIEME…TKGRITYRLR (72 aa)) form the S1-like domain.

It belongs to the IF-1 family. As to quaternary structure, component of the 30S ribosomal translation pre-initiation complex which assembles on the 30S ribosome in the order IF-2 and IF-3, IF-1 and N-formylmethionyl-tRNA(fMet); mRNA recruitment can occur at any time during PIC assembly.

Its subcellular location is the plastid. It is found in the chloroplast. One of the essential components for the initiation of protein synthesis. Stabilizes the binding of IF-2 and IF-3 on the 30S subunit to which N-formylmethionyl-tRNA(fMet) subsequently binds. Helps modulate mRNA selection, yielding the 30S pre-initiation complex (PIC). Upon addition of the 50S ribosomal subunit IF-1, IF-2 and IF-3 are released leaving the mature 70S translation initiation complex. This Mesostigma viride (Green alga) protein is Translation initiation factor IF-1, chloroplastic.